A 520-amino-acid polypeptide reads, in one-letter code: Vacuolar protein sorting-associated protein 9A (520 aa).

In terms of domain architecture, VPS9 spans 102–246 (VIADEKLFQK…ISNIDAKSIS (145 aa)). Asn180 and Asp185 together coordinate GTP. 3 disordered regions span residues 267 to 331 (DSQT…AESI), 396 to 433 (LAPSSSPLQASSGFNTSKESEDHRRSSSDVQMTKETDR), and 464 to 520 (LVEG…EASE). A compositionally biased stretch (polar residues) spans 287 to 323 (LQKTQSLNPKRENTLFQSKSSDSLSGTNELLNINSET). Ser330 is subject to Phosphoserine. Positions 396-407 (LAPSSSPLQASS) are enriched in low complexity. Composition is skewed to basic and acidic residues over residues 413–433 (KESEDHRRSSSDVQMTKETDR) and 464–497 (LVEGKDEERDSKVQGEVDAKDIELMKQIPKREGD).

In terms of assembly, homodimer. The homodimer interacts with RABF2B. Interacts with RABF1 and RABF2A. In terms of tissue distribution, widely expressed.

Its function is as follows. Functions as a guanine nucleotide exchange factor (GEF) for Rab small GTPases. Activates specifically RABF1, RABF2A and RABF2B proteins. Required for early stages of embryogenesis, cytokinesis, embryogenesis, and organ development. Is essential for the establishment or maintenance of the polar localization of the auxin efflux carrier PIN1. The protein is Vacuolar protein sorting-associated protein 9A of Arabidopsis thaliana (Mouse-ear cress).